Reading from the N-terminus, the 149-residue chain is UPF0260 protein PSEEN4031 (149 aa).

Belongs to the UPF0260 family.

The polypeptide is UPF0260 protein PSEEN4031 (Pseudomonas entomophila (strain L48)).